The primary structure comprises 354 residues: Chorismate synthase (354 aa).

R46 contributes to the NADP(+) binding site. FMN contacts are provided by residues 123–125, 233–234, G273, 288–292, and R314; these read RVS, NG, and KPTPS.

Belongs to the chorismate synthase family. In terms of assembly, homotetramer. FMNH2 serves as cofactor.

It catalyses the reaction 5-O-(1-carboxyvinyl)-3-phosphoshikimate = chorismate + phosphate. The protein operates within metabolic intermediate biosynthesis; chorismate biosynthesis; chorismate from D-erythrose 4-phosphate and phosphoenolpyruvate: step 7/7. In terms of biological role, catalyzes the anti-1,4-elimination of the C-3 phosphate and the C-6 proR hydrogen from 5-enolpyruvylshikimate-3-phosphate (EPSP) to yield chorismate, which is the branch point compound that serves as the starting substrate for the three terminal pathways of aromatic amino acid biosynthesis. This reaction introduces a second double bond into the aromatic ring system. The sequence is that of Chorismate synthase from Campylobacter curvus (strain 525.92).